The primary structure comprises 266 residues: N-acetyltransferase ECO1 (266 aa).

Residues 31–55 form a CCHH-type zinc finger; it reads KKCTECQMSYIIDSPADCAEHKKYH. The 159-residue stretch at 108-266 folds into the N-acetyltransferase domain; the sequence is TPGKTAEVKA…SGELLIPCYI (159 aa).

It belongs to the acetyltransferase family. ECO subfamily.

Its subcellular location is the nucleus. In terms of biological role, probable acetyltransferase required for the establishment of sister chromatid cohesion and couple the processes of cohesion and DNA replication to ensure that only sister chromatids become paired together. In contrast to the structural cohesins, the deposition and establishment factors are required only during S phase. Acts by acetylating the cohesin complex component SMC3. In Eremothecium gossypii (strain ATCC 10895 / CBS 109.51 / FGSC 9923 / NRRL Y-1056) (Yeast), this protein is N-acetyltransferase ECO1 (ECO1).